A 275-amino-acid polypeptide reads, in one-letter code: Elongation factor Ts (275 aa).

Lys-36 is covalently cross-linked (Isoglutamyl lysine isopeptide (Lys-Gln) (interchain with Q-Cter in protein Pup)). The segment at 76 to 79 (TDFV) is involved in Mg(2+) ion dislocation from EF-Tu.

It belongs to the EF-Ts family.

Its subcellular location is the cytoplasm. Associates with the EF-Tu.GDP complex and induces the exchange of GDP to GTP. It remains bound to the aminoacyl-tRNA.EF-Tu.GTP complex up to the GTP hydrolysis stage on the ribosome. In Mycolicibacterium smegmatis (strain ATCC 700084 / mc(2)155) (Mycobacterium smegmatis), this protein is Elongation factor Ts.